The primary structure comprises 197 residues: NAD(P)H-quinone oxidoreductase subunit 6, chloroplastic (197 aa).

The next 5 membrane-spanning stretches (helical) occupy residues 10–30 (FVLALVELGILLGSLGAVLLV), 39–59 (LGLVFTCISLLYFVLNADFVA), 60–80 (AAQLLVYVGAINVLTVFAVMI), 94–114 (IGYIITAGTCTILFSILSFVI), and 147–167 (LLGEFVIPFELLSILLLAALV).

It belongs to the complex I subunit 6 family. As to quaternary structure, NDH is composed of at least 16 different subunits, 5 of which are encoded in the nucleus.

Its subcellular location is the plastid. The protein resides in the chloroplast thylakoid membrane. It carries out the reaction a plastoquinone + NADH + (n+1) H(+)(in) = a plastoquinol + NAD(+) + n H(+)(out). It catalyses the reaction a plastoquinone + NADPH + (n+1) H(+)(in) = a plastoquinol + NADP(+) + n H(+)(out). NDH shuttles electrons from NAD(P)H:plastoquinone, via FMN and iron-sulfur (Fe-S) centers, to quinones in the photosynthetic chain and possibly in a chloroplast respiratory chain. The immediate electron acceptor for the enzyme in this species is believed to be plastoquinone. Couples the redox reaction to proton translocation, and thus conserves the redox energy in a proton gradient. The sequence is that of NAD(P)H-quinone oxidoreductase subunit 6, chloroplastic (ndhG) from Adiantum capillus-veneris (Maidenhair fern).